The sequence spans 263 residues: 3-methyl-2-oxobutanoate hydroxymethyltransferase (263 aa).

Mg(2+) is bound by residues aspartate 45 and aspartate 84. 3-methyl-2-oxobutanoate-binding positions include aspartate 45–serine 46, aspartate 84, and lysine 112. Mg(2+) is bound at residue glutamate 114. Catalysis depends on glutamate 181, which acts as the Proton acceptor.

It belongs to the PanB family. As to quaternary structure, homodecamer; pentamer of dimers. Requires Mg(2+) as cofactor.

The protein localises to the cytoplasm. The catalysed reaction is 3-methyl-2-oxobutanoate + (6R)-5,10-methylene-5,6,7,8-tetrahydrofolate + H2O = 2-dehydropantoate + (6S)-5,6,7,8-tetrahydrofolate. It functions in the pathway cofactor biosynthesis; (R)-pantothenate biosynthesis; (R)-pantoate from 3-methyl-2-oxobutanoate: step 1/2. Its function is as follows. Catalyzes the reversible reaction in which hydroxymethyl group from 5,10-methylenetetrahydrofolate is transferred onto alpha-ketoisovalerate to form ketopantoate. The protein is 3-methyl-2-oxobutanoate hydroxymethyltransferase of Buchnera aphidicola subsp. Acyrthosiphon pisum (strain 5A).